Consider the following 250-residue polypeptide: Small ribosomal subunit protein uS2 (250 aa).

The segment at Asp-226–Ala-250 is disordered. The segment covering Ala-239 to Ala-250 has biased composition (low complexity).

It belongs to the universal ribosomal protein uS2 family.

This Zymomonas mobilis subsp. mobilis (strain ATCC 31821 / ZM4 / CP4) protein is Small ribosomal subunit protein uS2 (rpsB).